The primary structure comprises 1622 residues: WD repeat-containing protein 97 (1622 aa).

WD repeat units lie at residues 187–233 (SEQG…RRLV), 290–329 (LHKTTISDLAYCEEVEAMVTASRDSTVKVWEADWQIRMVF), 331–370 (GHTGPVTAMTVLPNTTLVLSASQDGTLRTWDLQAAAQVGE), 552–592 (ELRC…TVFQ), 594–633 (EAHSPGPVVAIASTWNSIVSSGGDLTVKMWRVFPYAEESL), and 687–726 (DPTDHITGLCCCPTLKLYACSSLDCTVRIWTAENRLLRLL). Disordered regions lie at residues 1090 to 1112 (GEKPGEEGEEDKKEEEEEKEDEE) and 1453 to 1472 (LHPAGPAQLPGEPPPLEETD). The stretch at 1094-1118 (GEEGEEDKKEEEEEKEDEELDWALA) forms a coiled coil. The segment covering 1096–1112 (EGEEDKKEEEEEKEDEE) has biased composition (acidic residues).

This is WD repeat-containing protein 97 from Homo sapiens (Human).